We begin with the raw amino-acid sequence, 529 residues long: Methionine--tRNA ligase (529 aa).

A 'HIGH' region motif is present at residues 12 to 22; sequence YYVNALPHIGS. Zn(2+)-binding residues include C127, C130, C145, and H148. The short motif at 301 to 305 is the 'KMSKS' region element; sequence KMGKS. Position 304 (K304) interacts with ATP.

It belongs to the class-I aminoacyl-tRNA synthetase family. MetG type 2A subfamily. Monomer. The cofactor is Zn(2+).

Its subcellular location is the cytoplasm. It catalyses the reaction tRNA(Met) + L-methionine + ATP = L-methionyl-tRNA(Met) + AMP + diphosphate. Functionally, is required not only for elongation of protein synthesis but also for the initiation of all mRNA translation through initiator tRNA(fMet) aminoacylation. The protein is Methionine--tRNA ligase of Thermosynechococcus vestitus (strain NIES-2133 / IAM M-273 / BP-1).